Reading from the N-terminus, the 104-residue chain is Large ribosomal subunit protein uL24 (104 aa).

It belongs to the universal ribosomal protein uL24 family. In terms of assembly, part of the 50S ribosomal subunit.

Functionally, one of two assembly initiator proteins, it binds directly to the 5'-end of the 23S rRNA, where it nucleates assembly of the 50S subunit. In terms of biological role, one of the proteins that surrounds the polypeptide exit tunnel on the outside of the subunit. The protein is Large ribosomal subunit protein uL24 of Nitrobacter winogradskyi (strain ATCC 25391 / DSM 10237 / CIP 104748 / NCIMB 11846 / Nb-255).